The primary structure comprises 361 residues: Phospho-N-acetylmuramoyl-pentapeptide-transferase (361 aa).

10 helical membrane passes run 25 to 45 (RGILAALTALFLSLWMGPAVI), 73 to 93 (TMGGSLILLTVTLSVLLWGDL), 98 to 118 (VWLVLAVMICFGAIGWYDDWI), 139 to 159 (IFGLAAGLFLYYTADVPAAIT), 168 to 188 (IALPLVGVSFVVIAYFWIVGF), 200 to 220 (GLAIMPTVLVACALGVFAYAS), 237 to 257 (AGELIIICSAIAGAGLGFLWF), 264 to 284 (VFMGDIGALSLGAVLGTIAVI), 289 to 309 (MVLVIMGGVFVIETLSVIIQV), and 339 to 359 (VIVRFWIISVVLVLIGLATLK).

The protein belongs to the glycosyltransferase 4 family. MraY subfamily. Mg(2+) serves as cofactor.

The protein resides in the cell inner membrane. It carries out the reaction UDP-N-acetyl-alpha-D-muramoyl-L-alanyl-gamma-D-glutamyl-meso-2,6-diaminopimeloyl-D-alanyl-D-alanine + di-trans,octa-cis-undecaprenyl phosphate = di-trans,octa-cis-undecaprenyl diphospho-N-acetyl-alpha-D-muramoyl-L-alanyl-D-glutamyl-meso-2,6-diaminopimeloyl-D-alanyl-D-alanine + UMP. It functions in the pathway cell wall biogenesis; peptidoglycan biosynthesis. Catalyzes the initial step of the lipid cycle reactions in the biosynthesis of the cell wall peptidoglycan: transfers peptidoglycan precursor phospho-MurNAc-pentapeptide from UDP-MurNAc-pentapeptide onto the lipid carrier undecaprenyl phosphate, yielding undecaprenyl-pyrophosphoryl-MurNAc-pentapeptide, known as lipid I. The polypeptide is Phospho-N-acetylmuramoyl-pentapeptide-transferase (Xanthomonas oryzae pv. oryzae (strain MAFF 311018)).